A 353-amino-acid polypeptide reads, in one-letter code: Mitochondrial ubiquitin ligase activator of nfkb 1 (353 aa).

The Cytoplasmic portion of the chain corresponds to 1-8 (MENGGRPS). The helical transmembrane segment at 9–29 (VGQVILLTTSSAITALFYSIY) threads the bilayer. Topologically, residues 30-239 (RHKYRSVQTL…LLEKQEVQMR (210 aa)) are mitochondrial intermembrane. A helical membrane pass occupies residues 240 to 260 (WWRILSIVFGVASCITLFFIL). At 261-353 (RRKYRHYKEK…IDRIVPLYNS (93 aa)) the chain is on the cytoplasmic side. An RING-type zinc finger spans residues 303–341 (CSICLSTEKSCVFLECGHVCSCISCYQALPSPKKCPICR).

Homooligomer.

The protein resides in the mitochondrion outer membrane. The enzyme catalyses S-ubiquitinyl-[E2 ubiquitin-conjugating enzyme]-L-cysteine + [acceptor protein]-L-lysine = [E2 ubiquitin-conjugating enzyme]-L-cysteine + N(6)-ubiquitinyl-[acceptor protein]-L-lysine.. It functions in the pathway protein modification; protein ubiquitination. Its function is as follows. E3 ubiquitin-protein ligase that plays a role in the control of mitochondrial morphology. Promotes mitochondrial fragmentation and influences mitochondrial localization. Inhibits cell growth. E3 ubiquitin ligases accept ubiquitin from an E2 ubiquitin-conjugating enzyme in the form of a thioester and then directly transfer the ubiquitin to targeted substrates. The sequence is that of Mitochondrial ubiquitin ligase activator of nfkb 1 (mul1) from Xenopus laevis (African clawed frog).